Reading from the N-terminus, the 216-residue chain is 3-keto-L-gulonate-6-phosphate decarboxylase UlaD (216 aa).

D11 provides a ligand contact to substrate. Residues E33 and D62 each coordinate Mg(2+). Residue R192 participates in substrate binding.

The protein belongs to the HPS/KGPDC family. KGPDC subfamily. Homodimer. Mg(2+) is required as a cofactor.

The enzyme catalyses 3-dehydro-L-gulonate 6-phosphate + H(+) = L-xylulose 5-phosphate + CO2. The protein operates within cofactor degradation; L-ascorbate degradation; D-xylulose 5-phosphate from L-ascorbate: step 2/4. Its function is as follows. Catalyzes the decarboxylation of 3-keto-L-gulonate-6-P into L-xylulose-5-P. Is involved in the anaerobic L-ascorbate utilization. This chain is 3-keto-L-gulonate-6-phosphate decarboxylase UlaD, found in Shigella boydii serotype 18 (strain CDC 3083-94 / BS512).